Consider the following 228-residue polypeptide: DNA-3-methyladenine glycosylase 1 (228 aa).

Asp170 functions as the Proton acceptor in the catalytic mechanism.

It belongs to the alkylbase DNA glycosidase AlkA family.

It catalyses the reaction Hydrolysis of alkylated DNA, releasing 3-methyladenine, 3-methylguanine, 7-methylguanine and 7-methyladenine.. Functionally, hydrolysis of the deoxyribose N-glycosidic bond to excise 3-methyladenine or 7-methyladenine from the damaged DNA polymer formed by alkylation lesions. Can release ethylated and propylated bases from DNA in addition to 3-methyladenine. This is DNA-3-methyladenine glycosylase 1 (mag1) from Schizosaccharomyces pombe (strain 972 / ATCC 24843) (Fission yeast).